The following is a 90-amino-acid chain: DNA-binding protein HU-1 (90 aa).

Threonine 4 bears the Phosphothreonine mark. The segment at 55 to 90 (RSARKGRNPQTGEEIEIPATKNPAFKPGKQLKDAVN) is disordered.

It belongs to the bacterial histone-like protein family. Homodimer.

Its function is as follows. Histone-like DNA-binding protein which is capable of wrapping DNA to stabilize it, and thus to prevent its denaturation under extreme environmental conditions. The polypeptide is DNA-binding protein HU-1 (hup1) (Halalkalibacterium halodurans (strain ATCC BAA-125 / DSM 18197 / FERM 7344 / JCM 9153 / C-125) (Bacillus halodurans)).